We begin with the raw amino-acid sequence, 221 residues long: Max dimerization protein 1 (221 aa).

Residues 21–49 (RREREAEHGYASMLPYNSKERDGLKRKSK) carry the Nuclear localization signal motif. Disordered stretches follow at residues 29–67 (GYAS…EKNR) and 178–221 (SSSS…SIAL). Residues 55 to 107 (SSRSTHNEMEKNRRAHLRLCLEKLKMLVPLGPESNRHTTLSLLMRAKLHIKKL) form the bHLH domain. Positions 193 to 221 (MQSICSDEGYSSSGLKSIGLQNNPKSIAL) are enriched in polar residues.

As to quaternary structure, heterodimer with MAX; the interaction is required for DNA-binding. DNA binding requires dimerization with another bHLH protein; does not form homodimers, and does not bind to DNA in the absence of MAX in vitro. Expressed primarily in cells that have undergone terminal differentiation including notochord, floor plate and cement gland.

The protein resides in the nucleus. Component of a transcriptional repressor complex together with MAX. In complex with MAX binds to the core DNA sequence 5'-CAC[GA]TG-3'. Antagonizes MYC transcriptional activity by competing with MYC for MAX binding. Binds to the TERT promoter and represses telomerase expression, possibly by interfering with MYC binding. This Xenopus laevis (African clawed frog) protein is Max dimerization protein 1 (mxd1).